Reading from the N-terminus, the 116-residue chain is Flagellar transcriptional regulator FlhD (116 aa).

It belongs to the FlhD family. Homodimer; disulfide-linked. Forms a heterohexamer composed of two FlhC and four FlhD subunits. Each FlhC binds a FlhD dimer, forming a heterotrimer, and a hexamer assembles by dimerization of two heterotrimers.

It localises to the cytoplasm. Functionally, functions in complex with FlhC as a master transcriptional regulator that regulates transcription of several flagellar and non-flagellar operons by binding to their promoter region. Activates expression of class 2 flagellar genes, including fliA, which is a flagellum-specific sigma factor that turns on the class 3 genes. Also regulates genes whose products function in a variety of physiological pathways. The protein is Flagellar transcriptional regulator FlhD of Xenorhabdus nematophila (Achromobacter nematophilus).